Here is a 417-residue protein sequence, read N- to C-terminus: Serine hydroxymethyltransferase (417 aa).

(6S)-5,6,7,8-tetrahydrofolate-binding positions include leucine 121 and 125 to 127 (GHL). Lysine 229 carries the N6-(pyridoxal phosphate)lysine modification. 355–357 (SPF) provides a ligand contact to (6S)-5,6,7,8-tetrahydrofolate.

Belongs to the SHMT family. As to quaternary structure, homodimer. Pyridoxal 5'-phosphate serves as cofactor.

Its subcellular location is the cytoplasm. It carries out the reaction (6R)-5,10-methylene-5,6,7,8-tetrahydrofolate + glycine + H2O = (6S)-5,6,7,8-tetrahydrofolate + L-serine. The protein operates within one-carbon metabolism; tetrahydrofolate interconversion. It functions in the pathway amino-acid biosynthesis; glycine biosynthesis; glycine from L-serine: step 1/1. In terms of biological role, catalyzes the reversible interconversion of serine and glycine with tetrahydrofolate (THF) serving as the one-carbon carrier. This reaction serves as the major source of one-carbon groups required for the biosynthesis of purines, thymidylate, methionine, and other important biomolecules. Also exhibits THF-independent aldolase activity toward beta-hydroxyamino acids, producing glycine and aldehydes, via a retro-aldol mechanism. In Shewanella sp. (strain MR-4), this protein is Serine hydroxymethyltransferase.